Consider the following 153-residue polypeptide: Endoribonuclease YbeY (153 aa).

Residues His118, His122, and His128 each coordinate Zn(2+).

Belongs to the endoribonuclease YbeY family. Zn(2+) is required as a cofactor.

The protein resides in the cytoplasm. In terms of biological role, single strand-specific metallo-endoribonuclease involved in late-stage 70S ribosome quality control and in maturation of the 3' terminus of the 16S rRNA. This Staphylococcus saprophyticus subsp. saprophyticus (strain ATCC 15305 / DSM 20229 / NCIMB 8711 / NCTC 7292 / S-41) protein is Endoribonuclease YbeY.